The sequence spans 105 residues: Toxin ParE2 (105 aa).

It belongs to the RelE toxin family.

In terms of biological role, toxic component of a type II toxin-antitoxin (TA) system. Its toxic effect is neutralized by coexpression with cognate antitoxin ParD2. This is Toxin ParE2 (parE2) from Mycobacterium tuberculosis (strain CDC 1551 / Oshkosh).